A 368-amino-acid polypeptide reads, in one-letter code: DNA replication and repair protein RecF (368 aa).

An ATP-binding site is contributed by 30–37 (GNNAQGKT).

Belongs to the RecF family.

The protein localises to the cytoplasm. The RecF protein is involved in DNA metabolism; it is required for DNA replication and normal SOS inducibility. RecF binds preferentially to single-stranded, linear DNA. It also seems to bind ATP. This chain is DNA replication and repair protein RecF, found in Streptococcus pyogenes serotype M49 (strain NZ131).